Reading from the N-terminus, the 147-residue chain is Hemoglobin subunit beta-M (147 aa).

Residue V2 is modified to N-acetylvaline. The Globin domain maps to 3 to 147; that stretch reads HLTSEEKNCI…VAHALAHKYH (145 aa). Position 13 is a phosphothreonine (T13). Position 45 is a phosphoserine (S45). K60 carries the post-translational modification N6-acetyllysine. Residue H64 participates in heme b binding. K83 carries the N6-acetyllysine modification. Heme b is bound at residue H93. The residue at position 94 (C94) is an S-nitrosocysteine. An N6-acetyllysine modification is found at K145.

It belongs to the globin family. As to quaternary structure, heterotetramer of two alpha chains and two beta chains. In terms of tissue distribution, red blood cells.

Functionally, involved in oxygen transport from the lung to the various peripheral tissues. This is Hemoglobin subunit beta-M (HBB) from Didelphis virginiana (North American opossum).